A 294-amino-acid chain; its full sequence is MTFFGQILTAMVTPFTDTGDMNFSVAEALAIHLADHGTDTLLLCGTTGESPTLTWQEEYELFQVVRKAVASKAKVMAGTGSNSTREAIEATQQAAKLGLDGALLVVPYYNKPPQEGLYEHFRAIAESVPDFPLMLYNIPGRTGQNLEADTVARLAEIGNIVAIKEASGNLDQVSQIRRLTPPEFSIYSGDDSLTLPYLSVGAAGVVSVASHLVGELLQKMVTAFASGEPQVATEIHLKLLPLCKALFATTNPIPVKAALQLQGWQVGSTRLPLPEAPDPIIQKLKNTLTDLALL.

Pyruvate is bound at residue T47. Y136 (proton donor/acceptor) is an active-site residue. The active-site Schiff-base intermediate with substrate is the K164. A pyruvate-binding site is contributed by V206.

This sequence belongs to the DapA family. Homotetramer; dimer of dimers.

Its subcellular location is the cytoplasm. It catalyses the reaction L-aspartate 4-semialdehyde + pyruvate = (2S,4S)-4-hydroxy-2,3,4,5-tetrahydrodipicolinate + H2O + H(+). The protein operates within amino-acid biosynthesis; L-lysine biosynthesis via DAP pathway; (S)-tetrahydrodipicolinate from L-aspartate: step 3/4. Functionally, catalyzes the condensation of (S)-aspartate-beta-semialdehyde [(S)-ASA] and pyruvate to 4-hydroxy-tetrahydrodipicolinate (HTPA). In Acaryochloris marina (strain MBIC 11017), this protein is 4-hydroxy-tetrahydrodipicolinate synthase.